Here is a 502-residue protein sequence, read N- to C-terminus: Zinc finger protein 3 homolog (502 aa).

Basic and acidic residues-rich tracts occupy residues 1–13 (MGTENKEVIPKEE) and 80–93 (PSSEKDRENNESER). Disordered regions lie at residues 1 to 26 (MGTENKEVIPKEEISEESEPHGSLLE) and 47 to 103 (LEGH…NLVT). Residues Lys-6 and Lys-11 each participate in a glycyl lysine isopeptide (Lys-Gly) (interchain with G-Cter in SUMO2) cross-link. 13 consecutive C2H2-type zinc fingers follow at residues 141–163 (HTCKECGKAFNQNSHLIQHMRVH), 169–191 (FECKECGKTFGTNSSLRRHLRIH), 197–219 (FACNECGKAFIQSSHLIHHHRIH), 225–247 (YKCEECGKAFSQNSALILHQRIH), 253–275 (YECNECGKTFRVSSQLIQHQRIH), 281–303 (HECNECGKAFKHSSGLIRHQKIH), 309–331 (YLCNECGKGFGQSSELIRHQRIH), 337–359 (YECNECGKTFGQNSEIIRHIRIH), 365–387 (YVCKECGKAFRGNSELLRHERIH), 393–415 (YECFECGKAFRRTSHLIVHQRIH), 421–443 (HQCNECARTFWDNSELLLHQKIH), 449–471 (YECSECEKTFSQHSQLIIHQRIH), and 477–499 (YECQECQKTFSRSSHLLRHQSVH).

The protein belongs to the krueppel C2H2-type zinc-finger protein family.

The protein resides in the nucleus. Its function is as follows. May be involved in transcriptional regulation. The protein is Zinc finger protein 3 homolog (ZFP3) of Homo sapiens (Human).